A 316-amino-acid polypeptide reads, in one-letter code: CD276 antigen (316 aa).

The signal sequence occupies residues 1 to 28 (MLRGWGGPSVGVSMGTALGVLCLCLTGA). Positions 29–139 (VEVQVSEDPV…DSAAVSLQVA (111 aa)) constitute an Ig-like V-type domain. Residues 29 to 248 (VEVQVSEDPV…GQPMTFPPEA (220 aa)) lie on the Extracellular side of the membrane. N-linked (GlcNAc...) asparagine glycans are attached at residues Asn-104, Asn-189, and Asn-215. The 94-residue stretch at 145 to 238 (PSMTLEPNKD…QDAHGSVTIT (94 aa)) folds into the Ig-like C2-type domain. Cys-165 and Cys-220 are disulfide-bonded. Residues 249–269 (LWVTVGLSVCLVILLVALAFV) traverse the membrane as a helical segment. The Cytoplasmic portion of the chain corresponds to 270–316 (CWRKIKQSCEEENAGAEDQDGDGEGSKTALRPLKHSENKEDDGQEIA). Residues 281–292 (ENAGAEDQDGDG) show a composition bias toward acidic residues. The segment at 281–316 (ENAGAEDQDGDGEGSKTALRPLKHSENKEDDGQEIA) is disordered.

It belongs to the immunoglobulin superfamily. BTN/MOG family. In terms of assembly, interacts with TREML2 and this interaction enhances T-cell activation.

The protein resides in the membrane. Modulates T-cell-mediated immune responses and the development of acute and chronic transplant rejection. May play a positive regulatory role in bone formation and has a dual role in the bone-immune interface. Induces antitumor immunity as it activates both acquired and innate immunity leading to natural killer cell and CD8 T-cell dependent killing of tumor cells. The polypeptide is CD276 antigen (Cd276) (Rattus norvegicus (Rat)).